The primary structure comprises 145 residues: Protein SprT-like (145 aa).

Residues 4-140 form the SprT-like domain; sequence TNYVQEVSLA…VCGNCHGKLM (137 aa). Histidine 64 serves as a coordination point for Zn(2+). Glutamate 65 is an active-site residue. Histidine 68 contributes to the Zn(2+) binding site.

This sequence belongs to the SprT family. Zn(2+) serves as cofactor.

The protein resides in the cytoplasm. In Streptococcus pyogenes serotype M1, this protein is Protein SprT-like.